Reading from the N-terminus, the 227-residue chain is Deoxyribose-phosphate aldolase (227 aa).

Aspartate 84 acts as the Proton donor/acceptor in catalysis. Residue lysine 146 is the Schiff-base intermediate with acetaldehyde of the active site. Lysine 188 (proton donor/acceptor) is an active-site residue.

It belongs to the DeoC/FbaB aldolase family. DeoC type 1 subfamily.

Its subcellular location is the cytoplasm. It catalyses the reaction 2-deoxy-D-ribose 5-phosphate = D-glyceraldehyde 3-phosphate + acetaldehyde. It participates in carbohydrate degradation; 2-deoxy-D-ribose 1-phosphate degradation; D-glyceraldehyde 3-phosphate and acetaldehyde from 2-deoxy-alpha-D-ribose 1-phosphate: step 2/2. Functionally, catalyzes a reversible aldol reaction between acetaldehyde and D-glyceraldehyde 3-phosphate to generate 2-deoxy-D-ribose 5-phosphate. The chain is Deoxyribose-phosphate aldolase from Pyrobaculum islandicum (strain DSM 4184 / JCM 9189 / GEO3).